The following is a 396-amino-acid chain: Endo-1,4-beta-xylanase A (396 aa).

An N-terminal signal peptide occupies residues 1–28 (MITLFRKPFVAGLAISLLVGGGIGNVAA). The GH10 domain maps to 51–396 (AWQVASLSER…VKPAYWRIID (346 aa)). Glu195 (proton donor) is an active-site residue. Glu301 serves as the catalytic Nucleophile.

Belongs to the glycosyl hydrolase 10 (cellulase F) family.

The protein localises to the secreted. The catalysed reaction is Endohydrolysis of (1-&gt;4)-beta-D-xylosidic linkages in xylans.. It participates in glycan degradation; xylan degradation. The polypeptide is Endo-1,4-beta-xylanase A (xynA) (Halalkalibacterium halodurans (strain ATCC BAA-125 / DSM 18197 / FERM 7344 / JCM 9153 / C-125) (Bacillus halodurans)).